We begin with the raw amino-acid sequence, 386 residues long: Chorismate synthase (386 aa).

R45 and R51 together coordinate NADP(+). Residues 131-133, 251-252, S294, 309-313, and R335 contribute to the FMN site; these read RTS, QG, and KPIPS.

This sequence belongs to the chorismate synthase family. In terms of assembly, homotetramer. FMNH2 serves as cofactor.

The catalysed reaction is 5-O-(1-carboxyvinyl)-3-phosphoshikimate = chorismate + phosphate. It participates in metabolic intermediate biosynthesis; chorismate biosynthesis; chorismate from D-erythrose 4-phosphate and phosphoenolpyruvate: step 7/7. Functionally, catalyzes the anti-1,4-elimination of the C-3 phosphate and the C-6 proR hydrogen from 5-enolpyruvylshikimate-3-phosphate (EPSP) to yield chorismate, which is the branch point compound that serves as the starting substrate for the three terminal pathways of aromatic amino acid biosynthesis. This reaction introduces a second double bond into the aromatic ring system. This chain is Chorismate synthase, found in Clostridium tetani (strain Massachusetts / E88).